Reading from the N-terminus, the 635-residue chain is MQRSIATVSLSGTLPEKLEAIAAAGFDGVEIFENDLLYYAGSPRQVRQMCADLGIAITLFQPFRDFEGCRRDRLQKNLDRAERKFDLMQELGTDLVLVCSNVQADALGDEQLLVDDLRLLGEHAGKRGLRIGYEALAWGRHVNTYQQVWNLVRQADHPALGVILDSFHTLSLKGDPSAIRDIPGDKIFFVQMADAPILAMDVLEWSRHFRCFPGQGEMDMAGFLAPILATGYRGPLSLEIFNDGFRAAPTRQNAADGLRSLLYLEEQTRLRLEQENTPIEPGVLFSPPPASAYDGVEFLEFAVDEAVGARLGNWLKRLGFAEAGKHRSKEVQLLRQGDINIVLNAEPYSFGHNFFEAHGPSLCATALRVKDQQAALKRATAFRGQPFRGLVGPNECEVPAVRAPDGSLLYLVEQGTAGHTLYDTDFSLDNNATATGGLRRIDHMALALPAESLDSWVLFYKSLFDFAADDEVVLPDPYGLVKSRALRSQCGTLRLPLNISENRNTAIAHALSSYRGSGVHHIAFDCDDIFREVARAKLAGVPLLEIPLNYYDDLAARFDFDDEFLSELAYYNVLYDRDAQGGELFHVYTEPFEERFFFEIIQRKAGYAGYGAANVAVRLAAMAKARSGAARKPVL.

Residues Glu-134, Asp-165, Gln-191, and Glu-239 each coordinate a divalent metal cation. 2 VOC domains span residues 295-414 (GVEF…LVEQ) and 440-590 (RIDH…VYTE). Residues His-443, His-521, and Glu-599 each coordinate Mg(2+).

It belongs to the bacterial two-domain DSD family. Homodimer. Requires Co(2+) as cofactor. Ni(2+) is required as a cofactor. Mg(2+) serves as cofactor. The cofactor is Mn(2+).

It carries out the reaction 3-dehydroshikimate = 3,4-dihydroxybenzoate + H2O. It functions in the pathway aromatic compound metabolism; 3,4-dihydroxybenzoate biosynthesis. Its function is as follows. Catalyzes the conversion of 3-dehydroshikimate to protocatechuate (3,4-dihydroxybenzoate), a common intermediate of quinate and shikimate degradation pathways. The sequence is that of 3-dehydroshikimate dehydratase from Pseudomonas putida (strain ATCC 47054 / DSM 6125 / CFBP 8728 / NCIMB 11950 / KT2440).